A 130-amino-acid polypeptide reads, in one-letter code: Small ribosomal subunit protein uS8 (130 aa).

Belongs to the universal ribosomal protein uS8 family. In terms of assembly, part of the 30S ribosomal subunit.

Functionally, one of the primary rRNA binding proteins, it binds directly to 16S rRNA central domain where it helps coordinate assembly of the platform of the 30S subunit. The sequence is that of Small ribosomal subunit protein uS8 from Nitrosopumilus maritimus (strain SCM1).